A 1522-amino-acid polypeptide reads, in one-letter code: Lysophospholipase NTE1 (1522 aa).

Over 1–73 the chain is Lumenal; it reads MVDGTYVNSS…SLLVYLINGT (73 aa). Residues 74–94 form a helical membrane-spanning segment; that stretch reads VPFYLVVLGSVFTPIIVYLIL. Topologically, residues 95–1522 are cytoplasmic; the sequence is RSRVLSAYSR…IHLLHRRNSI (1428 aa). Disordered regions lie at residues 443-468, 485-523, and 535-556; these read SVQE…TPNK, DLLS…ASSP, and SQNF…PSVV. 2 stretches are compositionally biased toward low complexity: residues 498–511 and 540–555; these read KTAS…PRIS and PLSS…KPSV. A nucleoside 3',5'-cyclic phosphate is bound by residues 661-782 and 778-918; these read PINV…LTKL and TLTK…VAHK. Disordered stretches follow at residues 828 to 852 and 1125 to 1145; these read QKSK…DNQP and SSQN…GAPP. The region spanning 1219 to 1383 is the PNPLA domain; it reads LVLGGGGARG…LDNLPVLEMK (165 aa). The short motif at 1223 to 1228 is the GXGXXG element; sequence GGGARG. Positions 1250–1254 match the GXSXG motif; that stretch reads GTSIG. Catalysis depends on S1252, which acts as the Nucleophile. D1370 (proton acceptor) is an active-site residue. A DGA/G motif is present at residues 1370 to 1372; sequence DGG.

This sequence belongs to the NTE family.

It is found in the endoplasmic reticulum membrane. It catalyses the reaction a 1-acyl-sn-glycero-3-phosphocholine + H2O = sn-glycerol 3-phosphocholine + a fatty acid + H(+). Inhibited by organophosphorus esters. Intracellular phospholipase B that catalyzes the double deacylation of phosphatidylcholine (PC) to glycerophosphocholine (GroPCho). Plays an important role in membrane lipid homeostasis. Responsible for the rapid PC turnover in response to inositol, elevated temperatures, or when choline is present in the growth medium. This chain is Lysophospholipase NTE1 (NTE1), found in Eremothecium gossypii (strain ATCC 10895 / CBS 109.51 / FGSC 9923 / NRRL Y-1056) (Yeast).